An 818-amino-acid polypeptide reads, in one-letter code: BDNF/NT-3 growth factors receptor (818 aa).

Positions 1 to 31 (MVSWRRRPGPGLARLWGLCCLVLGCWRGALG) are cleaved as a signal peptide. Disulfide bonds link C32–C38 and C36–C45. At 32-426 (CPASCRCSSW…DVSNKENEDS (395 aa)) the chain is on the extracellular side. Residue N66 is glycosylated (N-linked (GlcNAc...) asparagine). An LRR 1 repeat occupies 71 to 92 (YIANQRKLESINDNEVGFYVGL). A glycan (N-linked (GlcNAc...) asparagine) is linked at N94. One copy of the LRR 2 repeat lies at 95-116 (LTVVDSGLRFVSRQAFVKNINL). N120 carries an N-linked (GlcNAc...) asparagine glycan. 2 disulfide bridges follow: C151-C175 and C153-C193. The region spanning 196–281 (PSANLSNYNI…GEVQTSAELT (86 aa)) is the Ig-like C2-type 1 domain. Residues N199, N204, N226, N253, N287, N324, and N337 are each glycosylated (N-linked (GlcNAc...) asparagine). Residues C217 and C265 are joined by a disulfide bond. An Ig-like C2-type 2 domain is found at 295–364 (TPDHHWCIPF…NGAYTLLAKN (70 aa)). An intrachain disulfide couples C301 to C344. The interval 384–394 (GSGPIVDPDVY) is provides specificity for BDNF as ligand versus NTF3 and NTF4. The span at 400-418 (PNDLGDTTNNSNQITSPDV) shows a compositional bias: polar residues. A disordered region spans residues 400-420 (PNDLGDTTNNSNQITSPDVSN). N408 carries an N-linked (GlcNAc...) asparagine glycan. Residues 427–450 (ITVYVVVGIAALVCTGLVIMLIIL) traverse the membrane as a helical segment. Residues 451–818 (KFGRHSKFGM…ASPVYLDILG (368 aa)) lie on the Cytoplasmic side of the membrane. The segment at 469–494 (NDDDSASPLHHISNGSNTPSSSEGGP) is disordered. Positions 481 to 491 (SNGSNTPSSSE) are enriched in polar residues. Y512 is modified (phosphotyrosine; by autocatalysis). Residues 534–803 (IVLKRELGEG…LNIKEIHSLL (270 aa)) enclose the Protein kinase domain. Residues 540–548 (LGEGAFGKV) and K568 contribute to the ATP site. The active-site Proton acceptor is the D672. Phosphotyrosine; by autocatalysis is present on residues Y698, Y702, Y703, and Y813.

This sequence belongs to the protein kinase superfamily. Tyr protein kinase family. Insulin receptor subfamily. As to quaternary structure, exists in a dynamic equilibrium between monomeric (low affinity) and dimeric (high affinity) structures. Interacts (phosphorylated upon activation by BDNF) with SHC1; mediates SHC1 phosphorylation and activation. Interacts (phosphorylated upon activation by BDNF) with PLCG1 and/or PLCG2; mediates PLCG1 phosphorylation and activation. Interacts with SH2B1 and SH2B2. Interacts with NGFR; may regulate the ligand specificity of the receptor. Interacts with SORCS2; this interaction is important for normal targeting to post-synaptic densities in response to high-frequency stimulation. Interacts (phosphorylated upon ligand-binding) with SH2D1A; regulates NTRK2. Interacts with SQSTM1 and KIDINS220. Interacts (phosphorylated upon ligand-binding) with FRS2; activates the MAPK signaling pathway. Interacts with APPL1. Interacts with MAPK8IP3/JIP3 and KLC1; interaction with KLC1 is mediated by MAPK8IP3/JIP3. In terms of processing, ligand-mediated auto-phosphorylation. Detected in embryonic brain and orsal root ganglia.

Its subcellular location is the cell membrane. It is found in the endosome membrane. The protein resides in the cell projection. The protein localises to the axon. It localises to the dendrite. Its subcellular location is the cytoplasm. It is found in the perinuclear region. The protein resides in the postsynaptic density. The catalysed reaction is L-tyrosyl-[protein] + ATP = O-phospho-L-tyrosyl-[protein] + ADP + H(+). The neuronal activity and the influx of calcium positively regulate the kinase activity and the internalization of the receptor which are both important for active signaling. Regulated by NGFR that may control the internalization of the receptor. NGFR may also stimulate the activation by BDNF compared to NTF3 and NTF4. The formation of active receptors dimers able to fully transduce the ligand-mediated signal, may be negatively regulated by the formation of inactive heterodimers with the non-catalytic isoforms. In terms of biological role, receptor tyrosine kinase involved in the development and the maturation of the central and the peripheral nervous systems through regulation of neuron survival, proliferation, migration, differentiation, and synapse formation and plasticity. Receptor for BDNF/brain-derived neurotrophic factor and NTF4/neurotrophin-4. Alternatively can also bind NTF3/neurotrophin-3 which is less efficient in activating the receptor but regulates neuron survival through NTRK2. Upon ligand-binding, undergoes homodimerization, autophosphorylation and activation. Recruits, phosphorylates and/or activates several downstream effectors including SHC1, FRS2, SH2B1, SH2B2 and PLCG1 that regulate distinct overlapping signaling cascades. Through SHC1, FRS2, SH2B1, SH2B2 activates the GRB2-Ras-MAPK cascade that regulates for instance neuronal differentiation including neurite outgrowth. Through the same effectors controls the Ras-PI3 kinase-AKT1 signaling cascade that mainly regulates growth and survival. Through PLCG1 and the downstream protein kinase C-regulated pathways controls synaptic plasticity. Thereby, plays a role in learning and memory by regulating both short term synaptic function and long-term potentiation. PLCG1 also leads to NF-Kappa-B activation and the transcription of genes involved in cell survival. Hence, it is able to suppress anoikis, the apoptosis resulting from loss of cell-matrix interactions. May also play a role in neutrophin-dependent calcium signaling in glial cells and mediate communication between neurons and glia. The chain is BDNF/NT-3 growth factors receptor (NTRK2) from Gallus gallus (Chicken).